The primary structure comprises 96 residues: MGWIQEQPGGSIRFRIRVQPRASKNEVCGLLDDALKVRLTAPPVDGEANAACLQFIAKTLGLSRSQVRLVAGETSRLKTLEVEGVSAEDLRKRFDI.

This sequence belongs to the UPF0235 family.

The sequence is that of UPF0235 protein Helmi_20270 from Heliobacterium modesticaldum (strain ATCC 51547 / Ice1).